Here is a 766-residue protein sequence, read N- to C-terminus: 1,4-alpha-glucan branching enzyme GlgB (766 aa).

The active-site Nucleophile is Asp-431. Glu-484 functions as the Proton donor in the catalytic mechanism.

It belongs to the glycosyl hydrolase 13 family. GlgB subfamily. As to quaternary structure, monomer.

The enzyme catalyses Transfers a segment of a (1-&gt;4)-alpha-D-glucan chain to a primary hydroxy group in a similar glucan chain.. It functions in the pathway glycan biosynthesis; glycogen biosynthesis. Its function is as follows. Catalyzes the formation of the alpha-1,6-glucosidic linkages in glycogen by scission of a 1,4-alpha-linked oligosaccharide from growing alpha-1,4-glucan chains and the subsequent attachment of the oligosaccharide to the alpha-1,6 position. The protein is 1,4-alpha-glucan branching enzyme GlgB of Thermosynechococcus vestitus (strain NIES-2133 / IAM M-273 / BP-1).